The sequence spans 265 residues: MTESLAAVVLGIVEGATEFLPVSSTGHLILVGHLIGFTGEKADSFDVIIQLGAILAVVCLYWRRFWWLVSPKPHHAFSGIRGLWMLFLTSLPAGLIGLVARKSIKAYLFNPWSVALALSVGAVMIFLVEQRKTRDRYYSLDEMTPGLALGIGCFQCLSLWPGFSRSAATIMGGMLLGAKRSLAAEYSFIGAVPLMFAATLYDFYKSAHLFSADDLGVLGIGFVVSFVSALIAVKAFIVLVQRITLRPFAWYRLALAAAVFFFWPK.

8 helical membrane-spanning segments follow: residues 19-39, 42-62, 80-100, 108-128, 143-163, 181-201, 220-240, and 243-263; these read FLPV…GFTG, ADSF…CLYW, IRGL…GLVA, LFNP…IFLV, MTPG…WPGF, SLAA…ATLY, IGFV…IVLV, and ITLR…FFFW.

Belongs to the UppP family.

It is found in the cell inner membrane. It carries out the reaction di-trans,octa-cis-undecaprenyl diphosphate + H2O = di-trans,octa-cis-undecaprenyl phosphate + phosphate + H(+). In terms of biological role, catalyzes the dephosphorylation of undecaprenyl diphosphate (UPP). Confers resistance to bacitracin. In Solidesulfovibrio magneticus (strain ATCC 700980 / DSM 13731 / RS-1) (Desulfovibrio magneticus), this protein is Undecaprenyl-diphosphatase.